The primary structure comprises 250 residues: Probable transcriptional regulatory protein PERMA_0079 (250 aa).

Belongs to the TACO1 family.

Its subcellular location is the cytoplasm. In Persephonella marina (strain DSM 14350 / EX-H1), this protein is Probable transcriptional regulatory protein PERMA_0079.